The primary structure comprises 75 residues: MARYFRRRKFCRFTAEGVSEIDYKDVVTLKNYITESGKIVPSRITGTCAKYQRQLARAIKRARYLSLLPYTDLHK.

It belongs to the bacterial ribosomal protein bS18 family. Part of the 30S ribosomal subunit. Forms a tight heterodimer with protein bS6.

Its function is as follows. Binds as a heterodimer with protein bS6 to the central domain of the 16S rRNA, where it helps stabilize the platform of the 30S subunit. The protein is Small ribosomal subunit protein bS18 of Psychromonas ingrahamii (strain DSM 17664 / CCUG 51855 / 37).